Reading from the N-terminus, the 238-residue chain is Putative type I specificity subunit S.MpnORF201P (238 aa).

This sequence belongs to the type-I restriction system S methylase family. As to quaternary structure, the methyltransferase is composed of M and S polypeptides.

Its function is as follows. The specificity (S) subunit of a type I methyltransferase (MTase); this subunit dictates DNA sequence specificity. The single R subunit has multiple frameshifts and is probably not expressed. The polypeptide is Putative type I specificity subunit S.MpnORF201P (Mycoplasma pneumoniae (strain ATCC 29342 / M129 / Subtype 1) (Mycoplasmoides pneumoniae)).